Consider the following 411-residue polypeptide: Probable 26S proteasome regulatory subunit rpn-6.2 (411 aa).

Residues 212–381 (YKTSFSYFYE…DTVVIYPKAG (170 aa)) enclose the PCI domain.

The protein belongs to the proteasome subunit S9 family. Component of the lid subcomplex of the 19S proteasome regulatory particle complex (also named PA700 complex). The 26S proteasome consists of a 20S proteasome core and two 19S regulatory subunits.

Component of the lid subcomplex of the 26S proteasome, a multiprotein complex involved in the ATP-dependent degradation of ubiquitinated proteins. In the complex, rpn-6.2 is required for proteasome assembly. In Caenorhabditis briggsae, this protein is Probable 26S proteasome regulatory subunit rpn-6.2.